The primary structure comprises 354 residues: 4-hydroxy-3-methylbut-2-en-1-yl diphosphate synthase (flavodoxin) (354 aa).

Residues Cys265, Cys268, Cys300, and Glu307 each contribute to the [4Fe-4S] cluster site.

This sequence belongs to the IspG family. Requires [4Fe-4S] cluster as cofactor.

It catalyses the reaction (2E)-4-hydroxy-3-methylbut-2-enyl diphosphate + oxidized [flavodoxin] + H2O + 2 H(+) = 2-C-methyl-D-erythritol 2,4-cyclic diphosphate + reduced [flavodoxin]. The protein operates within isoprenoid biosynthesis; isopentenyl diphosphate biosynthesis via DXP pathway; isopentenyl diphosphate from 1-deoxy-D-xylulose 5-phosphate: step 5/6. Functionally, converts 2C-methyl-D-erythritol 2,4-cyclodiphosphate (ME-2,4cPP) into 1-hydroxy-2-methyl-2-(E)-butenyl 4-diphosphate. The sequence is that of 4-hydroxy-3-methylbut-2-en-1-yl diphosphate synthase (flavodoxin) from Hydrogenobaculum sp. (strain Y04AAS1).